A 208-amino-acid chain; its full sequence is Methyl-CpG-binding domain protein 3-like 2 (208 aa).

Residues 1 to 89 are interacts with MBD3; it reads MGEPAFTSFP…HLEKPQQLCA (89 aa).

This sequence belongs to the MBD3L family. As to quaternary structure, interacts (via N-terminus) with MBD3; the interaction is direct. Interacts with MTA1. Interacts with HDAC1. Interacts with HDAC2. Interacts with RBBP4. Interacts with RBBP7. In terms of tissue distribution, detected at low levels in several somatic tissues. Highly expressed in the ovarian teratocarcinoma cell line PA-1.

The protein resides in the nucleus. In terms of biological role, may displace the NuRD complex from chromatin. This chain is Methyl-CpG-binding domain protein 3-like 2 (MBD3L2), found in Homo sapiens (Human).